The primary structure comprises 746 residues: Long-chain-alcohol oxidase FAO3 (746 aa).

The chain crosses the membrane as a helical span at residues 139–159; that stretch reads ILTPIRAAFVYIKVAFLFCFF. 233 to 248 serves as a coordination point for FAD; the sequence is CDVVVVGSGSGGGVAA. The active-site Proton acceptor is the His677.

It belongs to the GMC oxidoreductase family.

The protein resides in the membrane. The enzyme catalyses a long-chain primary fatty alcohol + O2 = a long-chain fatty aldehyde + H2O2. Functionally, long-chain fatty alcohol oxidase involved in the omega-oxidation pathway of lipid degradation. This is Long-chain-alcohol oxidase FAO3 (FAO3) from Arabidopsis thaliana (Mouse-ear cress).